We begin with the raw amino-acid sequence, 193 residues long: MARGATYKVQFKRRREGKTNYNKRYKLVDLDKTRMVVRITSNHTITQLVKIGENGDETLVSATSKNLKEFGWLGNGKNTSAAYLTGYLFGKKALNEGYDETILDIGVQPSIKGTKIYAVLKGALDAGLYIPHNDSILPEDSRIRGEHIAQYAESMDDDEKNAKFANYIRCGLSPEEIPDHFESVKNKIDEATQ.

It belongs to the universal ribosomal protein uL18 family. In terms of assembly, part of the 50S ribosomal subunit. Contacts the 5S and 23S rRNAs.

In terms of biological role, this is one of the proteins that bind and probably mediate the attachment of the 5S RNA into the large ribosomal subunit, where it forms part of the central protuberance. In Methanosphaera stadtmanae (strain ATCC 43021 / DSM 3091 / JCM 11832 / MCB-3), this protein is Large ribosomal subunit protein uL18.